Here is a 47-residue protein sequence, read N- to C-terminus: Small ribosomal subunit protein uS14 (47 aa).

Residues cysteine 12, cysteine 15, cysteine 30, and cysteine 33 each coordinate Zn(2+).

Belongs to the universal ribosomal protein uS14 family. Zinc-binding uS14 subfamily. As to quaternary structure, part of the 30S ribosomal subunit. Zn(2+) is required as a cofactor.

In terms of biological role, binds 16S rRNA, required for the assembly of 30S particles. This chain is Small ribosomal subunit protein uS14, found in Methanosphaera stadtmanae (strain ATCC 43021 / DSM 3091 / JCM 11832 / MCB-3).